A 150-amino-acid polypeptide reads, in one-letter code: Transcriptional regulator MraZ (150 aa).

2 SpoVT-AbrB domains span residues Ser7–Glu55 and Ala84–Ser127.

It belongs to the MraZ family. In terms of assembly, forms oligomers.

It is found in the cytoplasm. It localises to the nucleoid. The sequence is that of Transcriptional regulator MraZ from Marinobacter nauticus (strain ATCC 700491 / DSM 11845 / VT8) (Marinobacter aquaeolei).